The chain runs to 746 residues: Serine/threonine-protein kinase SMU1 (746 aa).

2 disordered regions span residues 1–138 and 155–212; these read MSLV…DTLH and QRSH…GSRN. Composition is skewed to low complexity over residues 15–54 and 85–105; these read SSAN…SSTT and SVSS…PSSA. Polar residues-rich tracts occupy residues 106-121, 128-138, and 156-176; these read LPWS…STAT, RSNTAGPDTLH, and RSHS…SSPT. Residues 194 to 203 are compositionally biased toward basic and acidic residues; sequence PSRDRERSRD. Residues 237–250 form the CRIB domain; that stretch reads ISTPYDPVHLTHVG. A disordered region spans residues 301–451; it reads GGSDVWKKMG…RRETKKSTIK (151 aa). A compositionally biased stretch (polar residues) spans 370–380; that stretch reads PPSNASTSSAD. Residues 414–430 show a composition bias toward low complexity; that stretch reads SPASRAPDAPAAVSAAS. The Protein kinase domain occupies 472-723; the sequence is YRSLQKIGQG…ALGMLAHPFL (252 aa). ATP is bound by residues 478–486 and Lys-501; that span reads IGQGASGGV. Catalysis depends on Asp-591, which acts as the Proton acceptor.

This sequence belongs to the protein kinase superfamily. STE Ser/Thr protein kinase family. STE20 subfamily.

The protein resides in the cytoplasm. It localises to the nucleus. The catalysed reaction is L-seryl-[protein] + ATP = O-phospho-L-seryl-[protein] + ADP + H(+). It catalyses the reaction L-threonyl-[protein] + ATP = O-phospho-L-threonyl-[protein] + ADP + H(+). Functionally, MAP4K component of the MAPK pathway required for the mating pheromone response and the regulation of cell polarity and cell cycle. Phosphorylates histone H2B to form H2BS10ph. The chain is Serine/threonine-protein kinase SMU1 (SMU1) from Mycosarcoma maydis (Corn smut fungus).